A 1214-amino-acid polypeptide reads, in one-letter code: Lysine-specific demethylase 3A (1214 aa).

A phosphoserine mark is found at S150 and S209. Residues 194 to 211 (TPSSNRQQNTPQAANSPP) are compositionally biased toward polar residues. 3 disordered regions span residues 194 to 215 (TPSSNRQQNTPQAANSPPNIGA), 271 to 293 (PKGSCIQPKTNTDQESRLESTPQ), and 310 to 398 (KAEL…KSVL). Phosphoserine is present on S330. The segment covering 361–370 (LGSQSQNLKE) has biased composition (polar residues). The segment covering 371–380 (TSVKVDHDSC) has biased composition (basic and acidic residues). A compositionally biased stretch (polar residues) spans 381–391 (CTRSSNKTQTP). The segment at 546 to 571 (CDVCDTTIFNLHWVCPRCGFGVCVDC) adopts a C6-type zinc-finger fold. Residues 769-773 (LRNLL) carry the LXXLL motif motif. K779 is subject to N6-acetyllysine. Positions 944–1167 (MPSRFDDLMA…HCFWLTQEFR (224 aa)) constitute a JmjC domain. Residues H1006, D1008, and H1135 each coordinate Fe cation.

This sequence belongs to the JHDM2 histone demethylase family. Interacts with VRK1. The cofactor is Fe(2+). In terms of tissue distribution, testis specific. Expressed only in male germ cells.

The protein resides in the cytoplasm. It localises to the nucleus. The catalysed reaction is N(6),N(6)-dimethyl-L-lysyl(9)-[histone H3] + 2 2-oxoglutarate + 2 O2 = L-lysyl(9)-[histone H3] + 2 formaldehyde + 2 succinate + 2 CO2. Functionally, histone demethylase that specifically demethylates 'Lys-9' of histone H3, thereby playing a central role in histone code. Preferentially demethylates mono- and dimethylated H3 'Lys-9' residue, with a preference for dimethylated residue, while it has weak or no activity on trimethylated H3 'Lys-9'. Demethylation of Lys residue generates formaldehyde and succinate. Involved in hormone-dependent transcriptional activation, by participating in recruitment to androgen-receptor target genes, resulting in H3 'Lys-9' demethylation and transcriptional activation. Involved in spermatogenesis by regulating expression of target genes such as PRM1 and TNP1 which are required for packaging and condensation of sperm chromatin. Directly regulates expression of PPARA and UCP1 and is involved in obesity resistance. The sequence is that of Lysine-specific demethylase 3A (Kdm3a) from Rattus norvegicus (Rat).